A 296-amino-acid polypeptide reads, in one-letter code: Polyamine aminopropyltransferase (296 aa).

One can recognise a PABS domain in the interval 16–251; that stretch reads HLWYFEYYTG…GMWSYTFASK (236 aa). An S-methyl-5'-thioadenosine-binding site is contributed by Gln46. Positions 77 and 101 each coordinate spermidine. Residues Glu121 and 152–153 each bind S-methyl-5'-thioadenosine; that span reads NG. Catalysis depends on Asp170, which acts as the Proton acceptor. Residue 170–173 coordinates spermidine; sequence DSTD.

It belongs to the spermidine/spermine synthase family. As to quaternary structure, homotetramer.

The protein localises to the cytoplasm. The enzyme catalyses S-adenosyl 3-(methylsulfanyl)propylamine + putrescine = S-methyl-5'-thioadenosine + spermidine + H(+). Its pathway is amine and polyamine biosynthesis; spermidine biosynthesis; spermidine from putrescine: step 1/1. Strongly inhibited by S-adenosyl-1,8-diamino-3-thiooctane. Its function is as follows. Catalyzes the irreversible transfer of a propylamine group from the amino donor S-adenosylmethioninamine (decarboxy-AdoMet) to putrescine (1,4-diaminobutane) to yield spermidine. It has lower affinity and lower activity towards 1,3-diaminopropane, cadaverine (1,5-diaminopentane), agmatine, norspermidine and spermidine (in vitro). The polypeptide is Polyamine aminopropyltransferase (Thermotoga maritima (strain ATCC 43589 / DSM 3109 / JCM 10099 / NBRC 100826 / MSB8)).